The chain runs to 476 residues: Bifunctional protein GlmU (476 aa).

Residues 1 to 235 (MTALDIIIMA…ALQVAGVNSP (235 aa)) form a pyrophosphorylase region. UDP-N-acetyl-alpha-D-glucosamine is bound by residues lysine 23, glutamine 81, 86-87 (GT), 108-110 (SGD), glycine 145, glutamate 160, and asparagine 233. Aspartate 110 serves as a coordination point for Mg(2+). Asparagine 233 lines the Mg(2+) pocket. Residues 236 to 256 (AQLAELERAHQRAQAAALMEQ) are linker. An N-acetyltransferase region spans residues 257–476 (GVRLADPARF…WKRPAKQAKG (220 aa)). Residues arginine 351 and lysine 369 each coordinate UDP-N-acetyl-alpha-D-glucosamine. Histidine 381 (proton acceptor) is an active-site residue. Tyrosine 384 and asparagine 395 together coordinate UDP-N-acetyl-alpha-D-glucosamine. Residues alanine 398, 404-405 (NY), serine 423, glycine 441, and arginine 458 contribute to the acetyl-CoA site.

The protein in the N-terminal section; belongs to the N-acetylglucosamine-1-phosphate uridyltransferase family. In the C-terminal section; belongs to the transferase hexapeptide repeat family. As to quaternary structure, homotrimer. The cofactor is Mg(2+).

It is found in the cytoplasm. The enzyme catalyses alpha-D-glucosamine 1-phosphate + acetyl-CoA = N-acetyl-alpha-D-glucosamine 1-phosphate + CoA + H(+). It carries out the reaction N-acetyl-alpha-D-glucosamine 1-phosphate + UTP + H(+) = UDP-N-acetyl-alpha-D-glucosamine + diphosphate. It functions in the pathway nucleotide-sugar biosynthesis; UDP-N-acetyl-alpha-D-glucosamine biosynthesis; N-acetyl-alpha-D-glucosamine 1-phosphate from alpha-D-glucosamine 6-phosphate (route II): step 2/2. Its pathway is nucleotide-sugar biosynthesis; UDP-N-acetyl-alpha-D-glucosamine biosynthesis; UDP-N-acetyl-alpha-D-glucosamine from N-acetyl-alpha-D-glucosamine 1-phosphate: step 1/1. It participates in bacterial outer membrane biogenesis; LPS lipid A biosynthesis. In terms of biological role, catalyzes the last two sequential reactions in the de novo biosynthetic pathway for UDP-N-acetylglucosamine (UDP-GlcNAc). The C-terminal domain catalyzes the transfer of acetyl group from acetyl coenzyme A to glucosamine-1-phosphate (GlcN-1-P) to produce N-acetylglucosamine-1-phosphate (GlcNAc-1-P), which is converted into UDP-GlcNAc by the transfer of uridine 5-monophosphate (from uridine 5-triphosphate), a reaction catalyzed by the N-terminal domain. The protein is Bifunctional protein GlmU of Acidovorax ebreus (strain TPSY) (Diaphorobacter sp. (strain TPSY)).